Reading from the N-terminus, the 319-residue chain is Cytochrome c biogenesis protein CcsA (319 aa).

7 helical membrane passes run 17–37 (TISI…LGGL), 44–64 (GMIV…ASSG), 68–88 (LSNL…LHTI), 143–163 (MLLS…ILII), 223–243 (VISL…VWAN), 257–271 (TWAF…IYLH), and 286–306 (VASI…LLGI).

The protein belongs to the CcmF/CycK/Ccl1/NrfE/CcsA family. In terms of assembly, may interact with Ccs1.

It localises to the plastid. It is found in the chloroplast thylakoid membrane. Functionally, required during biogenesis of c-type cytochromes (cytochrome c6 and cytochrome f) at the step of heme attachment. This Lolium perenne (Perennial ryegrass) protein is Cytochrome c biogenesis protein CcsA.